Reading from the N-terminus, the 399-residue chain is MYDLTSAQLDLQARARELAQTKFAPTAAQTDQTEEYPWKNVELLRDAGFMGMTLPKSIGGQGLSYLDAVIVVEEMAKACATMGRITVEANMGAIGAIAKYGTPEQLKIAADLVLAGDKPAICISEPNAGSAASEMTTRADRQGDHYIINGEKYWITGGGVSKVHLIFARVLEDGVDQGIGGFICVRDGENSPAGLVIGRRLYAMGVRGIPETHIEFHDLKVHKSMLVVPPGGLKRGFASLMTAYNAQRVGAGTVALGIAQGAFEEGLERLKTRHQFGRPIAEFQGLQWMAADMSTQLEAARLLLRHAAASGEEFPDIDKAARAKIFAAETANKVTNDALQFWGSSGYGRENPMERHVRDARMFTIAGGTAQILRTQVAGKLLGMKLPQTRDGFAKVAAR.

FAD is bound by residues 121-124 (ICIS), Ser-130, and 153-156 (YWIT). Residue 244 to 245 (YN) coordinates substrate. FAD contacts are provided by residues Arg-273, Gln-340, Ser-344, 367-371 (GGTAQ), and Gln-388.

It belongs to the acyl-CoA dehydrogenase family. In terms of assembly, homotrimer or homotetramer. It depends on FAD as a cofactor.

It carries out the reaction 3-sulfinopropanoyl-CoA + H2O = propanoyl-CoA + sulfite + H(+). Catalyzes the conversion 3-sulfinopropanoyl-CoA (3SP-CoA) to propanoyl-CoA by abstraction of sulfite. Does not show dehydrogenase activity. The sequence is that of 3-sulfinopropanoyl-CoA desulfinase from Variovorax paradoxus.